A 154-amino-acid polypeptide reads, in one-letter code: Transcriptional repressor NrdR (154 aa).

The segment at 3–34 (CPFCGHAATQVIDTRMSEEGDTVRRRRRCESC) is a zinc-finger region. The ATP-cone domain maps to 49–139 (PAVVKKNGSR…VYRSFEDLAE (91 aa)).

The protein belongs to the NrdR family. Zn(2+) serves as cofactor.

In terms of biological role, negatively regulates transcription of bacterial ribonucleotide reductase nrd genes and operons by binding to NrdR-boxes. This chain is Transcriptional repressor NrdR, found in Ralstonia pickettii (strain 12J).